Reading from the N-terminus, the 216-residue chain is uncharacterized protein (216 aa).

One can recognise an HTH cro/C1-type domain in the interval 8–63 (LKTLMTSVHINASELARRTGIAQPIIHRLSTGQNTNPKLATIKPIARYFMVNISQL). The segment at residues 19–38 (ASELARRTGIAQPIIHRLST) is a DNA-binding region (H-T-H motif).

This is an uncharacterized protein from Coxiella burnetii (strain RSA 493 / Nine Mile phase I).